Reading from the N-terminus, the 419-residue chain is UDP-N-acetylglucosamine 1-carboxyvinyltransferase (419 aa).

22–23 (KN) is a phosphoenolpyruvate binding site. R91 serves as a coordination point for UDP-N-acetyl-alpha-D-glucosamine. The active-site Proton donor is C115. Residue C115 is modified to 2-(S-cysteinyl)pyruvic acid O-phosphothioketal. Residues 120–124 (RPVDL), 160–163 (KVSV), D305, and I327 contribute to the UDP-N-acetyl-alpha-D-glucosamine site.

Belongs to the EPSP synthase family. MurA subfamily.

It localises to the cytoplasm. It carries out the reaction phosphoenolpyruvate + UDP-N-acetyl-alpha-D-glucosamine = UDP-N-acetyl-3-O-(1-carboxyvinyl)-alpha-D-glucosamine + phosphate. The protein operates within cell wall biogenesis; peptidoglycan biosynthesis. In vitro inhibited by covalent binding of fosfomycin and the fungal product terreic acid in the presence of substrate UDP-N-acetylglucosamine, with an inactivation rate constant of 130 M(-1)sec(-1) for terreic acid. Its function is as follows. Cell wall formation. Adds enolpyruvyl to UDP-N-acetylglucosamine. Target for the antibiotic fosfomycin. The protein is UDP-N-acetylglucosamine 1-carboxyvinyltransferase of Enterobacter cloacae subsp. cloacae (strain ATCC 13047 / DSM 30054 / NBRC 13535 / NCTC 10005 / WDCM 00083 / NCDC 279-56).